The following is a 397-amino-acid chain: Lysophospholipid transporter LplT (397 aa).

Residues 1–17 (MSESVHTNTSLWSKGMK) are Periplasmic-facing. The helical transmembrane segment at 18 to 38 (AVIVAQFLSAFGDNALLFATL) threads the bilayer. Topologically, residues 39-52 (ALLKAQFYPEWSQP) are cytoplasmic. Residues 53 to 73 (ILQMVFVGAYILFAPFVGQVA) traverse the membrane as a helical segment. The Periplasmic segment spans residues 74 to 90 (DSFAKGRVMMFANGLKL). Residues 91-111 (LGAASICFGINPFLGYTLVGV) form a helical membrane-spanning segment. At 112–144 (GAAAYSPAKYGILGELTTGSKLVKANGLMEAST) the chain is on the cytoplasmic side. The chain crosses the membrane as a helical span at residues 145–165 (IAAILLGSVAGGVLADWHVLV). A166 is a topological domain (periplasmic). The chain crosses the membrane as a helical span at residues 167–187 (LAACALAYGGAVVANIYIPKL). Over 188–226 (AAARPGQSWNLINMTRSFLNACTSLWRNGETRFSLVGTS) the chain is Cytoplasmic. The helical transmembrane segment at 227–247 (LFWGAGVTLRFLLVLWVPVAL) threads the bilayer. The Periplasmic portion of the chain corresponds to 248-256 (GITDNATPT). A helical membrane pass occupies residues 257–277 (YLNAMVAIGIVVGAGAAAKLV). Residues 278–280 (TLE) are Cytoplasmic-facing. Residues 281 to 301 (TVSRCMPAGILIGVVVLIFSL) traverse the membrane as a helical segment. Residues 302–304 (QHE) lie on the Periplasmic side of the membrane. Residues 305 to 325 (LLPAYALLMLIGVMGGFFVVP) traverse the membrane as a helical segment. Over 326–343 (LNALLQERGKKSVGAGNA) the chain is Cytoplasmic. Residues 344–364 (IAVQNLGENSAMLLMLGIYSL) traverse the membrane as a helical segment. The Periplasmic portion of the chain corresponds to 365–366 (AV). The chain crosses the membrane as a helical span at residues 367–387 (MIGIPVVPIGIGFGALFALAI). At 388 to 397 (TALWIWQRRH) the chain is on the cytoplasmic side.

Belongs to the major facilitator superfamily. LplT (TC 2.A.1.42) family.

The protein localises to the cell inner membrane. Functionally, catalyzes the facilitated diffusion of 2-acyl-glycero-3-phosphoethanolamine (2-acyl-GPE) into the cell. The protein is Lysophospholipid transporter LplT of Escherichia coli O8 (strain IAI1).